The primary structure comprises 511 residues: Gap junction alpha-3 protein (511 aa).

Residues 2–15 (GDWSFLGRLLENAQ) lie within the membrane without spanning it. The Cytoplasmic portion of the chain corresponds to 16 to 19 (EHST). A helical membrane pass occupies residues 20–40 (VIGKVWLTVLFIFRILVLGAA). Residues 41–71 (AEEVWGDEQSDFTCNTQQPGCENVCYDKAFP) lie on the Extracellular side of the membrane. Cystine bridges form between Cys54/Cys214, Cys61/Cys208, and Cys65/Cys203. A helical transmembrane segment spans residues 72-92 (ISHIRFWVLQIIFVSTPTLIY). At 93 to 174 (LGHVLHIVRM…GALLRTYIFN (82 aa)) the chain is on the cytoplasmic side. Residues 110–119 (EEELKKRGSV) show a composition bias toward basic and acidic residues. Residues 110-143 (EEELKKRGSVKDNNYPGAATSGGGSGGGNNFKDP) form a disordered region. Residues 129-138 (TSGGGSGGGN) are compositionally biased toward gly residues. Residues 175–195 (IIFKTLFEVGFIVGQYFLYGF) traverse the membrane as a helical segment. The Extracellular segment spans residues 196–223 (ELKPVYQCSRPPCPHTVDCFISRPTEKT). The chain crosses the membrane as a helical span at residues 224–244 (IFIIFMLVVASVSLLLNMLEI). At 245 to 511 (YHLGWKKLKQ…SRARSDDLAV (267 aa)) the chain is on the cytoplasmic side. A disordered region spans residues 397–511 (AEQQGKAPSS…SRARSDDLAV (115 aa)). Composition is skewed to low complexity over residues 403–415 (APSS…TPSS) and 440–456 (TTTN…ASGS).

The protein belongs to the connexin family. In terms of assembly, a hemichannel or connexon is composed of a hexamer of connexins. A functional gap junction is formed by the apposition of two hemichannels. During early stages of lens development, interacts with the C-terminus of MIP. As to expression, detected in eye lens.

The protein localises to the cell membrane. The protein resides in the cell junction. Its subcellular location is the gap junction. Its function is as follows. Structural component of lens fiber gap junctions. Gap junctions are dodecameric channels that connect the cytoplasm of adjoining cells. They are formed by the docking of two hexameric hemichannels, one from each cell membrane. Small molecules and ions diffuse from one cell to a neighboring cell via the central pore. This Gallus gallus (Chicken) protein is Gap junction alpha-3 protein (GJA3).